Reading from the N-terminus, the 885-residue chain is Exosome complex component 10 (885 aa).

Positions 1-10 (MAPPSPREHQ) are enriched in basic and acidic residues. Disordered regions lie at residues 1–23 (MAPP…PDAE) and 210–232 (KPLP…EDLD). A Glycyl lysine isopeptide (Lys-Gly) (interchain with G-Cter in SUMO2) cross-link involves residue K19. The segment covering 217 to 230 (SKERRERPQDRPED) has biased composition (basic and acidic residues). One can recognise a 3'-5' exonuclease domain in the interval 289–455 (HVVSSLDELV…YIYDRMRLEL (167 aa)). D313, E315, D371, and D440 together coordinate Mg(2+). Residues 503 to 583 (NSQQLTAFQL…QQAREMPLLK (81 aa)) form the HRDC domain. A Glycyl lysine isopeptide (Lys-Gly) (interchain with G-Cter in SUMO1); alternate cross-link involves residue K583. A Glycyl lysine isopeptide (Lys-Gly) (interchain with G-Cter in SUMO2); alternate cross-link involves residue K583. A Glycyl lysine isopeptide (Lys-Gly) (interchain with G-Cter in SUMO2) cross-link involves residue K710. The tract at residues 730-885 (VQKEPKEAAK…RGFRHNWPKR (156 aa)) is disordered. 2 stretches are compositionally biased toward basic and acidic residues: residues 732–756 (KEPK…KEES) and 776–794 (ATKK…EQKQ). S821 bears the Phosphoserine mark. Residues K833, K859, and K873 each participate in a glycyl lysine isopeptide (Lys-Gly) (interchain with G-Cter in SUMO2) cross-link.

Belongs to the exosome component 10/RRP6 family. Component of the RNA exosome complex. The catalytically inactive RNA exosome core complex (Exo-9) associates with the catalytic subunit EXOSC10/RRP6 (via its N-terminus). Exo-9 may associate with DIS3 to form the nucleolar exosome complex, or DIS3L to form the cytoplasmic exosome complex. The RNA exosome complex interacts with cofactors C1D/RRP47, MPHOSPH6/MPP6 and MTREX/MTR4. Interacts with MTREX; the interaction with MTREX mediates the association of MTREX with nuclear RNA exosomes. Part of the small subunit (SSU) processome, composed of more than 70 proteins and the RNA chaperone small nucleolar RNA (snoRNA) U3. Interacts with ALYREF/THOC4. Interacts with DHX36; this interaction occurs in a RNase-insensitive manner. Interacts with NRDE2. Interacts (via C-terminus) with USP36 (via C-terminus); the interaction is facilitated by the association with RNA and promotes sumoylation of EXOSC10. It depends on Mg(2+) as a cofactor. Post-translationally, sumoylated by USP36; sumoylation does not significantly affect EXOSC10 nucleolar localization and association with core exosome and USP36, but regulates the nucleolar RNA exosome activity in rRNA processing by promoting binding of EXOSC10 to pre-rRNAs. Effects of sumoylation on EXOSC10 levels vary between different studies. Sumoylation of EXOSC10 is required for the modulation of EXOSC10 effects on cellular protein translation and cell proliferation. Sumoylation is promoted by mild hypothermia. In terms of tissue distribution, expressed in testis (at protein level).

It is found in the cytoplasm. The protein localises to the nucleus. The protein resides in the nucleolus. It localises to the nucleoplasm. Its function is as follows. Catalytic component of the RNA exosome complex which has 3'-&gt;5' exoribonuclease activity and participates in a multitude of cellular RNA processing and degradation events. In the nucleus, the RNA exosome complex is involved in proper maturation of stable RNA species such as rRNA, snRNA and snoRNA, in the elimination of RNA processing by-products and non-coding 'pervasive' transcripts, such as antisense RNA species and promoter-upstream transcripts (PROMPTs), and of mRNAs with processing defects, thereby limiting or excluding their export to the cytoplasm. Part of the small subunit (SSU) processome, first precursor of the small eukaryotic ribosomal subunit. During the assembly of the SSU processome in the nucleolus, many ribosome biogenesis factors, an RNA chaperone and ribosomal proteins associate with the nascent pre-rRNA and work in concert to generate RNA folding, modifications, rearrangements and cleavage as well as targeted degradation of pre-ribosomal RNA by the RNA exosome. The RNA exosome may be involved in Ig class switch recombination (CSR) and/or Ig variable region somatic hypermutation (SHM) by targeting AICDA deamination activity to transcribed dsDNA substrates. In the cytoplasm, the RNA exosome complex is involved in general mRNA turnover and specifically degrades inherently unstable mRNAs containing AU-rich elements (AREs) within their 3' untranslated regions, and in RNA surveillance pathways, preventing translation of aberrant mRNAs. It seems to be involved in degradation of histone mRNA. EXOSC10 is required for nucleolar localization of C1D and probably mediates the association of MTREX, C1D and MPHOSPH6 with the RNA exosome involved in the maturation of 5.8S rRNA. Plays a role in the recruitment of replication protein A complex (RPA) and RAD51 to DNA double-strand breaks caused by irradiation, contributing to DNA repair by homologous recombination. Regulates levels of damage-induced RNAs in order to prevent DNA-RNA hybrid formation at DNA double-strand breaks and limit DNA end resection after damage. Plays a role in oocyte development, maturation and survival. Required for normal testis development and mitotic division of spermatogonia. Plays a role in proper embryo development. Required for global protein translation. Required for cell proliferation. In Rattus norvegicus (Rat), this protein is Exosome complex component 10.